Reading from the N-terminus, the 541-residue chain is Major facilitator-type transporter ecdD (541 aa).

Residues 15–35 (AWPAILISGFVAFGGILFGYD) traverse the membrane as a helical segment. The N-linked (GlcNAc...) asparagine glycan is linked to asparagine 64. Helical transmembrane passes span 72-92 (AIVS…SPMG), 106-126 (GIFV…PFLA), 129-149 (FFAG…QSET), and 156-176 (GFIV…ASVL). Residues asparagine 178 and asparagine 184 are each glycosylated (N-linked (GlcNAc...) asparagine). The helical transmembrane segment at 191-211 (IPIAVQFAWSIILVGGMLILP) threads the bilayer. An N-linked (GlcNAc...) asparagine glycan is attached at asparagine 253. Helical transmembrane passes span 277-297 (LVTG…FIMY), 313-333 (VITL…LYAI), 340-360 (PVLL…AVLG), 384-404 (IAFI…SAWV), 418-440 (SLSM…TPYL), and 454-474 (IFFI…FMIY).

This sequence belongs to the major facilitator superfamily. Sugar transporter (TC 2.A.1.1) family.

The protein localises to the membrane. The chain is Major facilitator-type transporter ecdD from Aspergillus rugulosus (Emericella rugulosa).